A 353-amino-acid chain; its full sequence is Holliday junction branch migration complex subunit RuvB (353 aa).

Residues 1-25 (MDPGPAGDEVSLAPQQETAEQDVET) form a disordered region. Residues 1–188 (MDPGPAGDEV…FGFTAHMEFY (188 aa)) are large ATPase domain (RuvB-L). ATP-binding positions include leucine 27, arginine 28, glycine 69, lysine 72, threonine 73, serine 74, 135–137 (EDY), arginine 178, tyrosine 188, and arginine 225. Residue threonine 73 coordinates Mg(2+). Residues 189-259 (EPAELELVVR…VARAALEVYD (71 aa)) are small ATPAse domain (RuvB-S). Positions 262–353 (EHGLDRLDRA…ATRSLFADEV (92 aa)) are head domain (RuvB-H). Residues arginine 317 and arginine 322 each contribute to the DNA site.

It belongs to the RuvB family. As to quaternary structure, homohexamer. Forms an RuvA(8)-RuvB(12)-Holliday junction (HJ) complex. HJ DNA is sandwiched between 2 RuvA tetramers; dsDNA enters through RuvA and exits via RuvB. An RuvB hexamer assembles on each DNA strand where it exits the tetramer. Each RuvB hexamer is contacted by two RuvA subunits (via domain III) on 2 adjacent RuvB subunits; this complex drives branch migration. In the full resolvosome a probable DNA-RuvA(4)-RuvB(12)-RuvC(2) complex forms which resolves the HJ.

Its subcellular location is the cytoplasm. The catalysed reaction is ATP + H2O = ADP + phosphate + H(+). Its function is as follows. The RuvA-RuvB-RuvC complex processes Holliday junction (HJ) DNA during genetic recombination and DNA repair, while the RuvA-RuvB complex plays an important role in the rescue of blocked DNA replication forks via replication fork reversal (RFR). RuvA specifically binds to HJ cruciform DNA, conferring on it an open structure. The RuvB hexamer acts as an ATP-dependent pump, pulling dsDNA into and through the RuvAB complex. RuvB forms 2 homohexamers on either side of HJ DNA bound by 1 or 2 RuvA tetramers; 4 subunits per hexamer contact DNA at a time. Coordinated motions by a converter formed by DNA-disengaged RuvB subunits stimulates ATP hydrolysis and nucleotide exchange. Immobilization of the converter enables RuvB to convert the ATP-contained energy into a lever motion, pulling 2 nucleotides of DNA out of the RuvA tetramer per ATP hydrolyzed, thus driving DNA branch migration. The RuvB motors rotate together with the DNA substrate, which together with the progressing nucleotide cycle form the mechanistic basis for DNA recombination by continuous HJ branch migration. Branch migration allows RuvC to scan DNA until it finds its consensus sequence, where it cleaves and resolves cruciform DNA. This Saccharopolyspora erythraea (strain ATCC 11635 / DSM 40517 / JCM 4748 / NBRC 13426 / NCIMB 8594 / NRRL 2338) protein is Holliday junction branch migration complex subunit RuvB.